Here is a 511-residue protein sequence, read N- to C-terminus: Lysine--tRNA ligase (511 aa).

The interval 1 to 20 is disordered; that stretch reads MQKNTSQPTNTNEQSNQPSL. 2 residues coordinate Mg(2+): E422 and E429.

This sequence belongs to the class-II aminoacyl-tRNA synthetase family. Homodimer. The cofactor is Mg(2+).

It localises to the cytoplasm. The enzyme catalyses tRNA(Lys) + L-lysine + ATP = L-lysyl-tRNA(Lys) + AMP + diphosphate. The polypeptide is Lysine--tRNA ligase (Chlorobium chlorochromatii (strain CaD3)).